Consider the following 170-residue polypeptide: MFRTLLSSTVRSIQLKPVTSTLSTTIPSITSIPTVSYFSTSPINYKTNTSTRTKENVHDLTTFLTLIGRNSIEYKDLFEDDLNKFLSTTSAQMKNMGIDTRARRYLLRWRHKFLNDLEPLREHKLGKKRNGGERKAKTVIAKRQALERLEEKEKWAQEELEAEKRGERLF.

The transit peptide at 1 to 20 (MFRTLLSSTVRSIQLKPVTS) directs the protein to the mitochondrion.

This sequence belongs to the mitochondrion-specific ribosomal protein mS41 family. In terms of assembly, component of the mitochondrial small ribosomal subunit (mt-SSU).

It is found in the mitochondrion. Its function is as follows. Component of the mitochondrial ribosome (mitoribosome), a dedicated translation machinery responsible for the synthesis of mitochondrial genome-encoded proteins, including at least some of the essential transmembrane subunits of the mitochondrial respiratory chain. The mitoribosomes are attached to the mitochondrial inner membrane and translation products are cotranslationally integrated into the membrane. mS41 is involved in telomere length regulation. This chain is Small ribosomal subunit protein mS41 (FYV4), found in Candida albicans (strain SC5314 / ATCC MYA-2876) (Yeast).